A 289-amino-acid chain; its full sequence is Phosphatidylglycerol--prolipoprotein diacylglyceryl transferase (289 aa).

Transmembrane regions (helical) follow at residues 23–43, 61–81, 99–119, 125–145, 199–219, 226–246, and 259–279; these read ALHW…WLAV, LLYM…VLFY, GGMS…WFAH, FFQV…AGRL, SQLY…NLFI, GSVS…TEFF, and LFSM…LMMV. An a 1,2-diacyl-sn-glycero-3-phospho-(1'-sn-glycerol)-binding site is contributed by arginine 144.

This sequence belongs to the Lgt family.

The protein resides in the cell inner membrane. It catalyses the reaction L-cysteinyl-[prolipoprotein] + a 1,2-diacyl-sn-glycero-3-phospho-(1'-sn-glycerol) = an S-1,2-diacyl-sn-glyceryl-L-cysteinyl-[prolipoprotein] + sn-glycerol 1-phosphate + H(+). Its pathway is protein modification; lipoprotein biosynthesis (diacylglyceryl transfer). In terms of biological role, catalyzes the transfer of the diacylglyceryl group from phosphatidylglycerol to the sulfhydryl group of the N-terminal cysteine of a prolipoprotein, the first step in the formation of mature lipoproteins. The polypeptide is Phosphatidylglycerol--prolipoprotein diacylglyceryl transferase (Pectobacterium atrosepticum (strain SCRI 1043 / ATCC BAA-672) (Erwinia carotovora subsp. atroseptica)).